Consider the following 217-residue polypeptide: MTNLKSKALDFTQNFVIALDGPAASGKGTIGFMLAEKFSLKYVQSSIVYRQLAFNCIKEKIDITDINKVISLSKEINITDKFDLEDENIGGVASQIAVIAEVRDNLNKHLVKLINTTPRILMEGRDIGTIVAPNADFKIFITANPEVRAERRYKQLQAKGKACILDEILQQIILRDKRDKEREVAPLLPALDALIIDTSKLSPLSVVEQIMQFILKE.

21 to 29 (GPAASGKGT) provides a ligand contact to ATP.

This sequence belongs to the cytidylate kinase family. Type 1 subfamily.

It is found in the cytoplasm. The catalysed reaction is CMP + ATP = CDP + ADP. The enzyme catalyses dCMP + ATP = dCDP + ADP. The sequence is that of Cytidylate kinase from Rickettsia bellii (strain OSU 85-389).